The primary structure comprises 827 residues: MSLTRRDFIKANAVPATAAAAGLATPAIAQPAKANIRWDKGVCRFCGTGCSVLVGVQDGRVVATQGDPDSPVNRGLNCIKGYFLSKIMYGEDRLTRPLLRMKDGKFDKNGEFQPISWDQAFDIMAEKWKEQLKKPDGVTRVGMFGSGQWTIWEGYAASKLYKAGFRSNNLDPNARHCMASAVAGFMRTFGIDEPMGCYDDIEQTDAFVLWGSNMAEMHPILWSRVTDRRLTHEGCKVAVLSTFEHRSFELADIPMVFTPQTDLAILNYICHYIISKNAYNKEFIDKHVNFKKGATDIGYGLRPTHALEKDQANAATPDKADPMTFDEFKAFVAEYTVEKVSKLSGVPADKLEALAKLYADPKVKVVSFWTMGFNQHTRGTWVNNMIYNVHLLMGKISEPGNSPFSLTGQPSACGTAREVGTFAHRLPADMVVMNDKHREIAERCWKLPAGTINPKIGYHAVLQHRMLKDGKLNAYWVMCTNNMQTAPNMNEEGYPGYRNPANFIVVSDPYPTVTALAADLILPTAMWMEKEGAYGNAERRTQFWAPEGQGSGRGRSDLWQIMEFSKRFKIEEVWPEELIAKKPELRGKTLFEVLYKNGQVDKFPLTELQAGFENDEAKAFGFYPQKGLFEEYASFGRGHAHDLAPFESYHKARGLRWPVVDGKETLWRFREGYDPYVKAGEGVKFYGKPDGKAWIFALPYAPAAESPDKDFDLWLSTGRVLEHWHSGSMTRRVPELHKSVPNAVLYMHPNDAAKRNLRNGDVVKVASRRGEVTTRIDTRGRNKPPEGLVFMPFFDESQLVNKLTLDATCPISKETDYKKCAVKVSKA.

The tat-type signal signal peptide spans 1 to 34 (MSLTRRDFIKANAVPATAAAAGLATPAIAQPAKA). Residues 36–92 (IRWDKGVCRFCGTGCSVLVGVQDGRVVATQGDPDSPVNRGLNCIKGYFLSKIMYGED) form the 4Fe-4S Mo/W bis-MGD-type domain. [4Fe-4S] cluster-binding residues include Cys43, Cys46, Cys50, and Cys78. Mo-bis(molybdopterin guanine dinucleotide) is bound by residues Lys80, Gln148, Asn173, Cys177, 210-217 (WGSNMAEM), 241-245 (STFEH), 260-262 (QTD), Met371, Gln375, Asn481, 507-508 (SD), Lys530, Asp557, and 717-726 (TGRVLEHWHS). Substrate is bound at residue Phe793. Residues Asn801 and Lys818 each contribute to the Mo-bis(molybdopterin guanine dinucleotide) site.

This sequence belongs to the prokaryotic molybdopterin-containing oxidoreductase family. NasA/NapA/NarB subfamily. In terms of assembly, component of the periplasmic nitrate reductase NapAB complex composed of NapA and NapB. It depends on [4Fe-4S] cluster as a cofactor. Mo-bis(molybdopterin guanine dinucleotide) serves as cofactor. Predicted to be exported by the Tat system. The position of the signal peptide cleavage has not been experimentally proven.

The protein localises to the periplasm. It carries out the reaction 2 Fe(II)-[cytochrome] + nitrate + 2 H(+) = 2 Fe(III)-[cytochrome] + nitrite + H2O. Its function is as follows. Catalytic subunit of the periplasmic nitrate reductase complex NapAB. Receives electrons from NapB and catalyzes the reduction of nitrate to nitrite. The chain is Periplasmic nitrate reductase from Paramagnetospirillum magnetotacticum (Aquaspirillum magnetotacticum).